We begin with the raw amino-acid sequence, 137 residues long: Putative nucleoside diphosphate kinase (137 aa).

ATP contacts are provided by Phe-45, Arg-73, Thr-79, Arg-90, and Asn-100. The Pros-phosphohistidine intermediate role is filled by His-103.

It belongs to the NDK family. Mg(2+) is required as a cofactor.

The catalysed reaction is a 2'-deoxyribonucleoside 5'-diphosphate + ATP = a 2'-deoxyribonucleoside 5'-triphosphate + ADP. It catalyses the reaction a ribonucleoside 5'-diphosphate + ATP = a ribonucleoside 5'-triphosphate + ADP. Functionally, major role in the synthesis of nucleoside triphosphates other than ATP. The ATP gamma phosphate is transferred to the NDP beta phosphate via a ping-pong mechanism, using a phosphorylated active-site intermediate. The polypeptide is Putative nucleoside diphosphate kinase (NME2P1) (Homo sapiens (Human)).